A 261-amino-acid chain; its full sequence is Methylmalonyl-CoA decarboxylase (261 aa).

Substrate-binding positions include 64–68 (AGHDI), Gly110, Thr132, and Lys253.

It belongs to the enoyl-CoA hydratase/isomerase family. Dimer of homotrimers.

It catalyses the reaction (R)-methylmalonyl-CoA + H(+) = propanoyl-CoA + CO2. Its function is as follows. Catalyzes the decarboxylation of (R)-methylmalonyl-CoA to propionyl-CoA. Could be part of a pathway that converts succinate to propanoate. This chain is Methylmalonyl-CoA decarboxylase (scpB), found in Escherichia coli (strain K12).